The primary structure comprises 97 residues: Large ribosomal subunit protein bL27 (97 aa).

A propeptide spanning residues 1–12 (MLNLNLANLQFM) is cleaved from the precursor. A disordered region spans residues 15 to 37 (KKGGGSTSNGRDSQAKRLGAKAA).

The protein belongs to the bacterial ribosomal protein bL27 family. In terms of processing, the N-terminus is cleaved by ribosomal processing cysteine protease Prp.

In Streptococcus suis (strain 98HAH33), this protein is Large ribosomal subunit protein bL27.